Here is a 331-residue protein sequence, read N- to C-terminus: tRNA-modifying protein YgfZ (331 aa).

Trp28 and Trp191 together coordinate folate.

This sequence belongs to the tRNA-modifying YgfZ family.

Its subcellular location is the cytoplasm. Functionally, folate-binding protein involved in regulating the level of ATP-DnaA and in the modification of some tRNAs. It is probably a key factor in regulatory networks that act via tRNA modification, such as initiation of chromosomal replication. The chain is tRNA-modifying protein YgfZ from Edwardsiella ictaluri (strain 93-146).